Here is an 898-residue protein sequence, read N- to C-terminus: DNA topoisomerase 1 (898 aa).

The 125-residue stretch at 2 to 126 (SKLVIVESPT…IKRMVFHEIT (125 aa)) folds into the Toprim domain. Mg(2+) is bound by residues Glu-8 and Asp-95. Residues 141–583 (DENLVHAQET…GFFLGESGLE (443 aa)) enclose the Topo IA-type catalytic domain. Residues 175–180 (SAGRVQ) are interaction with DNA. Tyr-320 acts as the O-(5'-phospho-DNA)-tyrosine intermediate in catalysis. Residues 840 to 898 (AEKAGSGKKTSRKKATTTAKGTKKTTSKKASATGTAKKTTTKRTTRKKAASPDQSSEAG) form a disordered region. Positions 848–866 (KTSRKKATTTAKGTKKTTS) are enriched in basic residues. A compositionally biased stretch (low complexity) spans 867–877 (KKASATGTAKK). The segment covering 878–888 (TTTKRTTRKKA) has biased composition (basic residues).

The protein belongs to the type IA topoisomerase family. Monomer. Requires Mg(2+) as cofactor.

The catalysed reaction is ATP-independent breakage of single-stranded DNA, followed by passage and rejoining.. In terms of biological role, releases the supercoiling and torsional tension of DNA, which is introduced during the DNA replication and transcription, by transiently cleaving and rejoining one strand of the DNA duplex. Introduces a single-strand break via transesterification at a target site in duplex DNA. The scissile phosphodiester is attacked by the catalytic tyrosine of the enzyme, resulting in the formation of a DNA-(5'-phosphotyrosyl)-enzyme intermediate and the expulsion of a 3'-OH DNA strand. The free DNA strand then undergoes passage around the unbroken strand, thus removing DNA supercoils. Finally, in the religation step, the DNA 3'-OH attacks the covalent intermediate to expel the active-site tyrosine and restore the DNA phosphodiester backbone. In Synechocystis sp. (strain ATCC 27184 / PCC 6803 / Kazusa), this protein is DNA topoisomerase 1.